The primary structure comprises 396 residues: Zinc metalloproteinase nas-24 (396 aa).

Residues 1-20 (MTRVVHIIGAAFLLSSYAYC) form the signal peptide. Residues 44 to 230 (ERLGSKWLGG…YKINQYYGCG (187 aa)) enclose the Peptidase M12A domain. Residues Asn-63 and Asn-79 are each glycosylated (N-linked (GlcNAc...) asparagine). 4 disulfides stabilise this stretch: Cys-82–Cys-229, Cys-105–Cys-129, Cys-231–Cys-251, and Cys-253–Cys-262. His-137 contributes to the Zn(2+) binding site. The active site involves Glu-138. Residues His-141 and His-147 each contribute to the Zn(2+) site. Residues 224–263 (NQYYGCGCSTQLECKNGGYTSPSDCSRCNCPKGFFGKLCN) enclose the EGF-like domain. A glycan (N-linked (GlcNAc...) asparagine) is linked at Asn-310.

It depends on Zn(2+) as a cofactor.

The protein localises to the secreted. Functionally, metalloprotease. This chain is Zinc metalloproteinase nas-24 (nas-24), found in Caenorhabditis elegans.